A 113-amino-acid chain; its full sequence is U11-theraphotoxin-Hhn1f (113 aa).

The signal sequence occupies residues 1–21 (MNTVRVTFLLVFVLAVSLGQA). Residues 22–74 (DKDENRMEMQEKTEQGKSYLDFAENLLLQKLEELEAKLLEEDSEESRNSRQKR) constitute a propeptide that is removed on maturation. The interval 61-83 (EEDSEESRNSRQKRCIGEGVPCD) is disordered. 3 disulfide bridges follow: Cys-75–Cys-90, Cys-82–Cys-95, and Cys-89–Cys-110.

The protein belongs to the neurotoxin 14 (magi-1) family. 01 (HNTX-16) subfamily. As to expression, expressed by the venom gland.

The protein resides in the secreted. Functionally, probable ion channel inhibitor. This chain is U11-theraphotoxin-Hhn1f, found in Cyriopagopus hainanus (Chinese bird spider).